The chain runs to 103 residues: Pyrimidine/purine nucleoside phosphorylase (103 aa).

This sequence belongs to the nucleoside phosphorylase PpnP family.

The enzyme catalyses a purine D-ribonucleoside + phosphate = a purine nucleobase + alpha-D-ribose 1-phosphate. It catalyses the reaction adenosine + phosphate = alpha-D-ribose 1-phosphate + adenine. The catalysed reaction is cytidine + phosphate = cytosine + alpha-D-ribose 1-phosphate. It carries out the reaction guanosine + phosphate = alpha-D-ribose 1-phosphate + guanine. The enzyme catalyses inosine + phosphate = alpha-D-ribose 1-phosphate + hypoxanthine. It catalyses the reaction thymidine + phosphate = 2-deoxy-alpha-D-ribose 1-phosphate + thymine. The catalysed reaction is uridine + phosphate = alpha-D-ribose 1-phosphate + uracil. It carries out the reaction xanthosine + phosphate = alpha-D-ribose 1-phosphate + xanthine. Catalyzes the phosphorolysis of diverse nucleosides, yielding D-ribose 1-phosphate and the respective free bases. Can use uridine, adenosine, guanosine, cytidine, thymidine, inosine and xanthosine as substrates. Also catalyzes the reverse reactions. This Shewanella baltica (strain OS195) protein is Pyrimidine/purine nucleoside phosphorylase.